Reading from the N-terminus, the 559-residue chain is D-2-hydroxyglutarate dehydrogenase, mitochondrial (559 aa).

The N-terminal 78 residues, 1–78 (MMMQKLRRSG…GMLLQQYKCF (78 aa)), are a transit peptide targeting the mitochondrion. In terms of domain architecture, FAD-binding PCMH-type spans 130–309 (YKGSSKLMLL…TKVSILTQPK (180 aa)).

The protein belongs to the FAD-binding oxidoreductase/transferase type 4 family. As to quaternary structure, homodimer. The cofactor is FAD.

It localises to the mitochondrion. The catalysed reaction is (R)-2-hydroxyglutarate + A = 2-oxoglutarate + AH2. Its function is as follows. Catalyzes the oxidation of (R)-2-hydroxyglutarate to 2-oxoglutarate. May be involved in the catabolism of propionyl-CoA derived from beta-oxidation. Involved in degradation of lysine for the supply of carbon and electrons to the ETF/ETFQO complex during dark-induced sugar starvation. The polypeptide is D-2-hydroxyglutarate dehydrogenase, mitochondrial (D2HGDH) (Arabidopsis thaliana (Mouse-ear cress)).